A 621-amino-acid polypeptide reads, in one-letter code: 1-deoxy-D-xylulose-5-phosphate synthase (621 aa).

Thiamine diphosphate contacts are provided by residues His-76 and 117-119 (AHS). Asp-148 is a Mg(2+) binding site. Thiamine diphosphate is bound by residues 149-150 (GA), Asn-178, Tyr-285, and Glu-367. Asn-178 provides a ligand contact to Mg(2+).

It belongs to the transketolase family. DXPS subfamily. Homodimer. The cofactor is Mg(2+). It depends on thiamine diphosphate as a cofactor.

It catalyses the reaction D-glyceraldehyde 3-phosphate + pyruvate + H(+) = 1-deoxy-D-xylulose 5-phosphate + CO2. Its pathway is metabolic intermediate biosynthesis; 1-deoxy-D-xylulose 5-phosphate biosynthesis; 1-deoxy-D-xylulose 5-phosphate from D-glyceraldehyde 3-phosphate and pyruvate: step 1/1. Catalyzes the acyloin condensation reaction between C atoms 2 and 3 of pyruvate and glyceraldehyde 3-phosphate to yield 1-deoxy-D-xylulose-5-phosphate (DXP). This is 1-deoxy-D-xylulose-5-phosphate synthase from Aromatoleum aromaticum (strain DSM 19018 / LMG 30748 / EbN1) (Azoarcus sp. (strain EbN1)).